We begin with the raw amino-acid sequence, 598 residues long: MSDRTRTTRYANGSLRTCQNCARAKIRCIRSVPTGSCDRCERLRKTCQFQPGRRANAGPSLSESKDRRIDALEAKLDRLLAQSTSATVSEASIDDKSPTTTPTTPRPPPDVIDSGLLTLEAASLLLQDYQRTLMPYCPFVMVPSPATAATLRRDKPFLFLAILTAALYDNMPLQRTLELEVKRTIGRCMIFDGPVSFDMLQGLLVHLAWCQYHSRPRRFSQYLHLAISIITDLQLDRAPEDRFWRTRVDFNGELDREISWGREERRAVVGFFWFSSSISQILQKRSSFSFIPYLETSCELLASTAEYDSDQHLLQLIQLQRLSERIIVASGQHTSEPHDADALEQCYRDRRSELDLYLAQLPFPLTDSHLLMMQYHTVELYLCQVTLFDHKPSAQRPRHDSPFPIEALRMGLTAARTLLDFYISLPLRREVAFNNAGWVQLGFVVTLACKLAVAAADPHIHPHMADLTRALDLSTMLSRCILRIQALVTSQMDARGDRDVFYHYEKRLKRAQWWFESRSLSRSQQQRNEPLPVAGAGEASSPRNARIAEIPAEEEFQVGYAAVSGDGFDFQWPGLFPDPTFDDMFGDWMAQGSSGFDD.

Residues 18–47 constitute a DNA-binding region (zn(2)-C6 fungal-type); that stretch reads CQNCARAKIRCIRSVPTGSCDRCERLRKTC. The tract at residues 87–110 is disordered; sequence TVSEASIDDKSPTTTPTTPRPPPD.

Its subcellular location is the nucleus. In terms of biological role, transcription factor that, with himB, probably co-regulates the him gene cluster that mediates the biosynthesis of himeic acid A, a ubiquitin-activating enzyme (E1) inhibitor. The polypeptide is Transcription factor himD (Aspergillus japonicus).